Here is a 222-residue protein sequence, read N- to C-terminus: Uracil-DNA glycosylase (222 aa).

Asp61 functions as the Proton acceptor in the catalytic mechanism.

This sequence belongs to the uracil-DNA glycosylase (UDG) superfamily. UNG family.

It is found in the cytoplasm. The catalysed reaction is Hydrolyzes single-stranded DNA or mismatched double-stranded DNA and polynucleotides, releasing free uracil.. In terms of biological role, excises uracil residues from the DNA which can arise as a result of misincorporation of dUMP residues by DNA polymerase or due to deamination of cytosine. This Aeromonas hydrophila subsp. hydrophila (strain ATCC 7966 / DSM 30187 / BCRC 13018 / CCUG 14551 / JCM 1027 / KCTC 2358 / NCIMB 9240 / NCTC 8049) protein is Uracil-DNA glycosylase.